Consider the following 192-residue polypeptide: dTTP/UTP pyrophosphatase (192 aa).

Residue Asp71 is the Proton acceptor of the active site.

It belongs to the Maf family. YhdE subfamily. The cofactor is a divalent metal cation.

It localises to the cytoplasm. It catalyses the reaction dTTP + H2O = dTMP + diphosphate + H(+). The enzyme catalyses UTP + H2O = UMP + diphosphate + H(+). Its function is as follows. Nucleoside triphosphate pyrophosphatase that hydrolyzes dTTP and UTP. May have a dual role in cell division arrest and in preventing the incorporation of modified nucleotides into cellular nucleic acids. This Clostridium tetani (strain Massachusetts / E88) protein is dTTP/UTP pyrophosphatase.